The primary structure comprises 173 residues: Photosystem I assembly protein Ycf3 (173 aa).

TPR repeat units follow at residues 35–68, 72–105, and 120–153; these read AYVYYRDGLSAQNAGDYAEALENYEESLKLEESP, SETLKNMAIIYMSNGDEDLALDTYQRALDQNSNQ, and GRTAQEAGLQDEADQLFDRAADVWTQAVRLYPGG.

It belongs to the Ycf3 family.

Its subcellular location is the cellular thylakoid membrane. Its function is as follows. Essential for the assembly of the photosystem I (PSI) complex. May act as a chaperone-like factor to guide the assembly of the PSI subunits. The sequence is that of Photosystem I assembly protein Ycf3 from Prochlorococcus marinus (strain MIT 9303).